The primary structure comprises 342 residues: Holliday junction branch migration complex subunit RuvB (342 aa).

The interval 1-179 is large ATPase domain (RuvB-L); sequence MTNILSPEKS…FGIPMRLNFY (179 aa). Residues isoleucine 18, arginine 19, glycine 60, lysine 63, threonine 64, threonine 65, 126 to 128, arginine 169, tyrosine 179, and arginine 216 contribute to the ATP site; that span reads EDF. Residue threonine 64 coordinates Mg(2+). The tract at residues 180–250 is small ATPAse domain (RuvB-S); sequence NTEELKQVLN…ICDFGLKRLT (71 aa). Residues 253 to 342 are head domain (RuvB-H); it reads SIGLDSNDYR…NQLNILNENE (90 aa). Residues arginine 289, arginine 308, and arginine 313 each contribute to the DNA site.

The protein belongs to the RuvB family. Homohexamer. Forms an RuvA(8)-RuvB(12)-Holliday junction (HJ) complex. HJ DNA is sandwiched between 2 RuvA tetramers; dsDNA enters through RuvA and exits via RuvB. An RuvB hexamer assembles on each DNA strand where it exits the tetramer. Each RuvB hexamer is contacted by two RuvA subunits (via domain III) on 2 adjacent RuvB subunits; this complex drives branch migration. In the full resolvosome a probable DNA-RuvA(4)-RuvB(12)-RuvC(2) complex forms which resolves the HJ.

The protein localises to the cytoplasm. The enzyme catalyses ATP + H2O = ADP + phosphate + H(+). Its function is as follows. Participates in UV-tolerance of Synechocystis PCC 6803. The RuvA-RuvB-RuvC complex processes Holliday junction (HJ) DNA during genetic recombination and DNA repair, while the RuvA-RuvB complex plays an important role in the rescue of blocked DNA replication forks via replication fork reversal (RFR). RuvA specifically binds to HJ cruciform DNA, conferring on it an open structure. The RuvB hexamer acts as an ATP-dependent pump, pulling dsDNA into and through the RuvAB complex. RuvB forms 2 homohexamers on either side of HJ DNA bound by 1 or 2 RuvA tetramers; 4 subunits per hexamer contact DNA at a time. Coordinated motions by a converter formed by DNA-disengaged RuvB subunits stimulates ATP hydrolysis and nucleotide exchange. Immobilization of the converter enables RuvB to convert the ATP-contained energy into a lever motion, pulling 2 nucleotides of DNA out of the RuvA tetramer per ATP hydrolyzed, thus driving DNA branch migration. The RuvB motors rotate together with the DNA substrate, which together with the progressing nucleotide cycle form the mechanistic basis for DNA recombination by continuous HJ branch migration. Branch migration allows RuvC to scan DNA until it finds its consensus sequence, where it cleaves and resolves cruciform DNA. In Rickettsia prowazekii (strain Madrid E), this protein is Holliday junction branch migration complex subunit RuvB.